The following is a 762-amino-acid chain: Cell surface protein (762 aa).

The N-terminal stretch at 1-26 (MKNLKKLIAVVSTFALVFSAMAVGFA) is a signal peptide. 3 SLH domains span residues 27–90 (ATTP…EMAK), 92–155 (EKSA…WPYG), and 156–204 (YLAK…KEVL). Residues Tyr-297, Tyr-516, Tyr-520, and Tyr-632 are each glycosylated (O-linked (Glc...) tyrosine).

In terms of processing, glycosylated; contains 8% carbohydrates, which correspond to about 40 to 50 sugar molecules per monomer. O-linked glycans consist of Glc, GalNAc and GlcNAc.

The protein resides in the secreted. It is found in the cell wall. It localises to the S-layer. In terms of biological role, the S-layer is a paracrystalline mono-layered assembly of proteins which coat the surface of bacteria. This chain is Cell surface protein, found in Thermoanaerobacter kivui (Acetogenium kivui).